A 242-amino-acid chain; its full sequence is Octanoyltransferase (242 aa).

A BPL/LPL catalytic domain is found at Ser-31–Gln-206. Residues Arg-70–His-77, Ser-137–Gly-139, and Gly-150–Ala-152 each bind substrate. Cys-168 acts as the Acyl-thioester intermediate in catalysis.

Belongs to the LipB family.

Its subcellular location is the cytoplasm. The catalysed reaction is octanoyl-[ACP] + L-lysyl-[protein] = N(6)-octanoyl-L-lysyl-[protein] + holo-[ACP] + H(+). It participates in protein modification; protein lipoylation via endogenous pathway; protein N(6)-(lipoyl)lysine from octanoyl-[acyl-carrier-protein]: step 1/2. Catalyzes the transfer of endogenously produced octanoic acid from octanoyl-acyl-carrier-protein onto the lipoyl domains of lipoate-dependent enzymes. Lipoyl-ACP can also act as a substrate although octanoyl-ACP is likely to be the physiological substrate. The sequence is that of Octanoyltransferase from Coxiella burnetii (strain Dugway 5J108-111).